A 130-amino-acid polypeptide reads, in one-letter code: Small ribosomal subunit protein bS16 (130 aa).

The interval Ala-80–Glu-130 is disordered. Over residues Lys-99–Ala-109 the composition is skewed to basic and acidic residues. Positions Lys-110–Glu-130 are enriched in low complexity.

The protein belongs to the bacterial ribosomal protein bS16 family.

The sequence is that of Small ribosomal subunit protein bS16 from Jannaschia sp. (strain CCS1).